The primary structure comprises 508 residues: H/ACA ribonucleoprotein complex subunit 4 (508 aa).

The interval methionine 1–glutamine 29 is disordered. Aspartate 123 acts as the Nucleophile in catalysis. The PUA domain maps to histidine 294–methionine 369. Positions alanine 423–glutamate 508 are disordered. A Phosphoserine modification is found at serine 442. Residues serine 442 to glutamate 457 show a composition bias toward low complexity. Position 443 is a phosphothreonine (threonine 443). Phosphoserine occurs at positions 444 and 445. A Phosphothreonine modification is found at threonine 449. The residue at position 455 (serine 455) is a Phosphoserine. Threonine 458 is subject to Phosphothreonine. Residues glutamate 475–glutamate 485 show a composition bias toward acidic residues. Positions lysine 499–glutamate 508 are enriched in basic and acidic residues.

It belongs to the pseudouridine synthase TruB family. Component of the box H/ACA small nucleolar ribonucleoprotein (H/ACA snoRNP) complex consisting of Nop60B, Gar1, NPH2 and Nop10, and associated with H/ACA-type snoRNAs. Expressed at higher levels in females than in males. As to expression, expressed almost exclusively in females with high levels of expression in the ovary.

The protein resides in the nucleus. It is found in the nucleolus. The enzyme catalyses a uridine in RNA = a pseudouridine in RNA. Catalytic subunit of the box H/ACA small nucleolar ribonucleoprotein (H/ACA snoRNP) complex, which catalyzes pseudouridylation of rRNA. This involves the isomerization of uridine such that the ribose is subsequently attached to C5, instead of the normal N1. Pseudouridine ('psi') residues may serve to stabilize the conformation of rRNAs. Required for ribosome biogenesis; plays a central role in ribosomal RNA processing. H/ACA snoRNP complex-dependent ribosome biogenesis is important in female germline cell differentiation during oogenesis. Essential for viability and female fertility. Required for maintenance of the germline stem cell lineage during spermatogenesis. The chain is H/ACA ribonucleoprotein complex subunit 4 from Drosophila melanogaster (Fruit fly).